Reading from the N-terminus, the 76-residue chain is Small ribosomal subunit protein bS18 (76 aa).

Belongs to the bacterial ribosomal protein bS18 family. Part of the 30S ribosomal subunit. Forms a tight heterodimer with protein bS6.

Its function is as follows. Binds as a heterodimer with protein bS6 to the central domain of the 16S rRNA, where it helps stabilize the platform of the 30S subunit. This Brevibacillus brevis (strain 47 / JCM 6285 / NBRC 100599) protein is Small ribosomal subunit protein bS18.